A 232-amino-acid chain; its full sequence is Ribonuclease 3 (232 aa).

Residues 9–131 enclose the RNase III domain; sequence INLLQKKLGY…IIGGIFLDSN (123 aa). A Mg(2+)-binding site is contributed by Glu44. Asp48 is an active-site residue. Residues Asp117 and Glu120 each contribute to the Mg(2+) site. The active site involves Glu120. Residues 158 to 228 enclose the DRBM domain; the sequence is DPKTRLQEYL…AENALKFLIE (71 aa).

It belongs to the ribonuclease III family. In terms of assembly, homodimer. Requires Mg(2+) as cofactor.

It localises to the cytoplasm. The enzyme catalyses Endonucleolytic cleavage to 5'-phosphomonoester.. In terms of biological role, digests double-stranded RNA. Involved in the processing of primary rRNA transcript to yield the immediate precursors to the large and small rRNAs (23S and 16S). Processes some mRNAs, and tRNAs when they are encoded in the rRNA operon. Processes pre-crRNA and tracrRNA of type II CRISPR loci if present in the organism. This Blochmanniella floridana protein is Ribonuclease 3.